The chain runs to 310 residues: NADH-cytochrome b5 reductase 1 (310 aa).

Residues 30 to 50 (WVPFAVALAAGFVAWKLSVGG) form a helical membrane-spanning segment. One can recognise an FAD-binding FR-type domain in the interval 61-166 (NEFQNFVLKE…RGPKGAMVYT (106 aa)). FAD-binding positions include 146–160 (TTLK…RGPK) and 172–209 (HIGM…QVDL).

It belongs to the flavoprotein pyridine nucleotide cytochrome reductase family. Monomer. Component of the 2-(3-amino-3-carboxypropyl)histidine synthase complex composed of dph1, dph2, dph3 and a NADH-dependent reductase, predominantly cbr1. It depends on FAD as a cofactor.

The protein localises to the mitochondrion outer membrane. It catalyses the reaction 2 Fe(III)-[cytochrome b5] + NADH = 2 Fe(II)-[cytochrome b5] + NAD(+) + H(+). The enzyme catalyses 2 Fe(3+)-[Dph3] + NADH = 2 Fe(2+)-[Dph3] + NAD(+) + H(+). The protein operates within protein modification; peptidyl-diphthamide biosynthesis. Functionally, NADH-dependent reductase for dph3 and cytochrome b5. Required for the first step of diphthamide biosynthesis, a post-translational modification of histidine which occurs in elongation factor 2. Dph1 and dph2 transfer a 3-amino-3-carboxypropyl (ACP) group from S-adenosyl-L-methionine (SAM) to a histidine residue, the reaction is assisted by a reduction system comprising dph3 and a NADH-dependent reductase, predominantly cbr1. By reducing dph3, also involved in the formation of the tRNA wobble base modification mcm5s 2U (5-methoxycarbonylmethyl-2-thiouridine), mediated by the elongator complex. The cytochrome b5/NADH cytochrome b5 reductase electron transfer system supports the catalytic activity of several sterol biosynthetic enzymes. The sequence is that of NADH-cytochrome b5 reductase 1 (cbr1) from Emericella nidulans (strain FGSC A4 / ATCC 38163 / CBS 112.46 / NRRL 194 / M139) (Aspergillus nidulans).